A 594-amino-acid polypeptide reads, in one-letter code: KIF-binding protein (594 aa).

It belongs to the KIF-binding protein family.

The protein resides in the cytoplasm. It localises to the cytoskeleton. In terms of biological role, activator of KIF1B plus-end-directed microtubule motor activity. Required for organization of axonal microtubules, and axonal outgrowth and maintenance during peripheral and central nervous system development. In Gallus gallus (Chicken), this protein is KIF-binding protein (Kifbp).